A 275-amino-acid chain; its full sequence is Fructoselysine 3-epimerase (275 aa).

Glutamate 148 serves as the catalytic Proton donor/acceptor. A divalent metal cation is bound by residues glutamate 148, aspartate 181, histidine 207, and glutamate 247. Glutamate 247 serves as the catalytic Proton donor/acceptor.

This sequence belongs to the FrlC family. As to quaternary structure, homooctamer. It depends on Ni(2+) as a cofactor. Requires Co(2+) as cofactor.

It catalyses the reaction N(6)-(D-psicosyl)-L-lysine = N(6)-(D-fructosyl)-L-lysine. In terms of biological role, catalyzes the reversible interconversion of fructoselysine with its C-3 epimer, psicoselysine. Allows E.coli to utilize psicoselysine for growth. Does not act on psicose or fructoselysine 6-phosphate. This is Fructoselysine 3-epimerase (frlC) from Escherichia coli O157:H7.